A 59-amino-acid chain; its full sequence is MLKSLKFLLVFIILAQLLSCTPSAPYEIKSPCVSVDIDDNSSLSINPCIRRPINAVNIV.

A helical transmembrane segment spans residues 7–24; sequence FLLVFIILAQLLSCTPSA.

Its subcellular location is the membrane. This is an uncharacterized protein from Rickettsia prowazekii (strain Madrid E).